Reading from the N-terminus, the 838-residue chain is MQEQEIGLLSKYNEGLCINTDPNSILMSILDMSLHRQMGSDRDLQSSASSVSLPSVKKAPKKRRISIGSLFRRKKENKRKSRELNGGVDGIASIESIHSEMCTDKNSIFSTNTSSDNGLTSISKQIGDFIECPLCLLRHSKDRFPEIMTCHHRSCVDCLRQYLRIEISESRVNISCPECTERFNPHDIRLILSDDVLMEKYEEFMLRRWLVADPDCRWCPAPDCGYAVIAFGCASCPKLTCGREGCGTEFCYHCKQIWHPNQTCDAARQERAQSLRLRTIRSSSISYSQESGAAADDIKPCPRCAAYIIKMNDGSCNHMTCAVCGCEFCWLCMKEISDLHYLSPSGCTFWGKKPWSRKKKILWQLGTLVGAPVGIALIAGIAIPAMIIGIPVYVGRKIHNRYEGKDVSKHKRNLAIAGGVTLSVIVSPVVAAVTVGIGVPIMLAYVYGVVPISLCRSGGCGVSAGNGKGVRIEFDDENDINVGGTNTAVDTTSVAEARHNPSIGEGSVGGLTGSLSASGSHMDRIGAIRDNLSETASTMALAGASITGSLSGSAMVNCFNRLEVQADVQKERYSLSGESGTVSLGTVSDNASTKAMAGSILNSYIPLDKEGNSMEVQVDIESKPSKFRHNSGSSSVDDGSAARSHPGGLSGGLPEGKSSATKWSKEATAGKKSKSGKLRKKSNMKINETREDMDAQLLEQQSTNSSEFEAPSLSDSMPSVADSHSSHFSEFSCSDLESMKTSCSHGSTDYHARFATVNILPEVENDRLENSPHQCSISVLTKTASCSEDPQLNHIAEEHSNNGIRPNVDLYFGNALKETNNNHSHQTMELKVAIQTDI.

Positions 128–351 (DFIECPLCLL…LSPSGCTFWG (224 aa)) are TRIAD supradomain. Zn(2+)-binding residues include cysteine 132, cysteine 135, cysteine 150, histidine 152, cysteine 155, cysteine 158, cysteine 176, cysteine 179, cysteine 219, cysteine 224, cysteine 241, cysteine 246, cysteine 251, cysteine 254, histidine 259, cysteine 264, cysteine 301, and cysteine 304. Residues 132–179 (CPLCLLRHSKDRFPEIMTCHHRSCVDCLRQYLRIEISESRVNISCPEC) form an RING-type 1 zinc finger. The IBR-type zinc finger occupies 199 to 264 (EKYEEFMLRR…KQIWHPNQTC (66 aa)). An RING-type 2; atypical zinc finger spans residues 301–332 (CPRCAAYIIKMNDGSCNHMTCAVCGCEFCWLC). Residue cysteine 316 is part of the active site. The Zn(2+) site is built by cysteine 321, cysteine 324, cysteine 329, cysteine 332, histidine 340, and cysteine 347. The next 2 helical transmembrane spans lie at 368–388 (LVGAPVGIALIAGIAIPAMII) and 424–444 (VIVSPVVAAVTVGIGVPIMLA). 2 disordered regions span residues 622 to 685 (SKPS…SNMK) and 700 to 721 (QQSTNSSEFEAPSLSDSMPSVA). Serine 631 is subject to Phosphoserine. Low complexity predominate over residues 631–644 (SGSSSVDDGSAARS). Residues 660–838 (ATKWSKEATA…ELKVAIQTDI (179 aa)) form an interaction with CASR region. The segment covering 671-683 (KKSKSGKLRKKSN) has biased composition (basic residues). The segment covering 700–717 (QQSTNSSEFEAPSLSDSM) has biased composition (polar residues).

It belongs to the RBR family. RNF19 subfamily. As to quaternary structure, interacts with UBE2L3 and UBE2L6. Also interacts with transcription factor Sp1. Interacts with SNCAIP, CASR and VCP.

The protein resides in the membrane. It is found in the cytoplasm. The protein localises to the cytoskeleton. It localises to the microtubule organizing center. Its subcellular location is the centrosome. The catalysed reaction is [E2 ubiquitin-conjugating enzyme]-S-ubiquitinyl-L-cysteine + [acceptor protein]-L-lysine = [E2 ubiquitin-conjugating enzyme]-L-cysteine + [acceptor protein]-N(6)-ubiquitinyl-L-lysine.. The protein operates within protein modification; protein ubiquitination. E3 ubiquitin-protein ligase which accepts ubiquitin from E2 ubiquitin-conjugating enzymes UBE2L3 and UBE2L6 in the form of a thioester and then directly transfers the ubiquitin to targeted substrates, such as SNCAIP or CASR. This is E3 ubiquitin-protein ligase RNF19A (RNF19A) from Sus scrofa (Pig).